We begin with the raw amino-acid sequence, 73 residues long: Alternative prion protein (73 aa).

A helical transmembrane segment spans residues 32-52; the sequence is WWWLGAASWWWLGAAPWWWLG.

In terms of tissue distribution, detected in brain homogenate, primary neurons, and peripheral blood mononuclear cells (at protein level).

It localises to the mitochondrion outer membrane. This chain is Alternative prion protein (PRNP), found in Homo sapiens (Human).